Consider the following 218-residue polypeptide: Cell division protein SepF (218 aa).

A disordered region spans residues 25–115 (DVAASTDNVI…IANRREQYQQ (91 aa)). The span at 29–43 (STDNVIPRSQQSVRA) shows a compositional bias: polar residues. A compositionally biased stretch (basic and acidic residues) spans 47–63 (PKQEPRNNHVQQDHQAR). Positions 102–115 (STSSIANRREQYQQ) are enriched in polar residues.

The protein belongs to the SepF family. Homodimer. Interacts with FtsZ.

It localises to the cytoplasm. In terms of biological role, cell division protein that is part of the divisome complex and is recruited early to the Z-ring. Probably stimulates Z-ring formation, perhaps through the cross-linking of FtsZ protofilaments. Its function overlaps with FtsA. In Streptococcus pyogenes serotype M5 (strain Manfredo), this protein is Cell division protein SepF.